A 257-amino-acid chain; its full sequence is MAAAAGRLLWSSVARPASTIFRSISASTVLRPVASRRTCLTDMLWSACPQAKFAFSTSSSFHTPAVTQHAPHFKGTAVVNGEFKELSLDDFKGKYLVLFFYPLDFTFVCPTEIVAFSDKANEFHDVNCEVVAVSVDSHFSHLAWINTPRKNGGLGHMNITLLSDLTKQISRDYGVLLESAGIALRGLFIIDPNGVIKHLSVNDLPVGRSVEEPLRLVKAFQFVETHGEVCPANWTPESPTIKPSPTASKEYFEKVHQ.

The N-terminal 62 residues, 1–62, are a transit peptide targeting the mitochondrion; that stretch reads MAAAAGRLLW…FAFSTSSSFH (62 aa). The Thioredoxin domain maps to 64-222; sequence PAVTQHAPHF…PLRLVKAFQF (159 aa). Lys84 carries the N6-succinyllysine modification. Lys92 carries the N6-acetyllysine; alternate modification. Lys92 is subject to N6-succinyllysine; alternate. The active-site Cysteine sulfenic acid (-SOH) intermediate is the Cys109. Thr147 carries the post-translational modification Phosphothreonine.

This sequence belongs to the peroxiredoxin family. AhpC/Prx1 subfamily. As to quaternary structure, homodimer; disulfide-linked, upon oxidation. 6 homodimers assemble to form a ring-like dodecamer. Interacts with NEK6. Interacts with LRRK2. Interacts with MAP3K13. Interacts with RPS6KC1 (via PX domain). Phosphorylated by LRRK2; phosphorylation reduces perodixase activity. In terms of processing, the enzyme can be inactivated by further oxidation of the cysteine sulfenic acid (C(P)-SOH) to sulphinic acid (C(P)-SO2H) and sulphonic acid (C(P)-SO3H) instead of its condensation to a disulfide bond. Post-translationally, S-palmitoylated. Ubiquitous.

Its subcellular location is the mitochondrion. The protein localises to the cytoplasm. It is found in the early endosome. It carries out the reaction a hydroperoxide + [thioredoxin]-dithiol = an alcohol + [thioredoxin]-disulfide + H2O. In terms of biological role, thiol-specific peroxidase that catalyzes the reduction of hydrogen peroxide and organic hydroperoxides to water and alcohols, respectively. Plays a role in cell protection against oxidative stress by detoxifying peroxides. Acts synergistically with MAP3K13 to regulate the activation of NF-kappa-B in the cytosol. Required for the maintenance of physical strength. This chain is Thioredoxin-dependent peroxide reductase, mitochondrial (Prdx3), found in Rattus norvegicus (Rat).